The sequence spans 101 residues: Nucleoid-associated protein Cla_0113 (101 aa).

Belongs to the YbaB/EbfC family. Homodimer.

Its subcellular location is the cytoplasm. It is found in the nucleoid. Functionally, binds to DNA and alters its conformation. May be involved in regulation of gene expression, nucleoid organization and DNA protection. The protein is Nucleoid-associated protein Cla_0113 of Campylobacter lari (strain RM2100 / D67 / ATCC BAA-1060).